Reading from the N-terminus, the 43-residue chain is MTKNINQPVAYPIFTFRWLAVHGLAIPTVFFLGGITAMQFIQR.

A helical membrane pass occupies residues 18-34 (WLAVHGLAIPTVFFLGG). His-22 provides a ligand contact to heme.

The protein belongs to the PsbE/PsbF family. In terms of assembly, heterodimer of an alpha subunit and a beta subunit. PSII is composed of 1 copy each of membrane proteins PsbA, PsbB, PsbC, PsbD, PsbE, PsbF, PsbH, PsbI, PsbJ, PsbK, PsbL, PsbM, PsbT, PsbX, PsbY, PsbZ, Psb30/Ycf12, at least 3 peripheral proteins of the oxygen-evolving complex and a large number of cofactors. It forms dimeric complexes. It depends on heme b as a cofactor.

It is found in the plastid. The protein resides in the chloroplast thylakoid membrane. Functionally, this b-type cytochrome is tightly associated with the reaction center of photosystem II (PSII). PSII is a light-driven water:plastoquinone oxidoreductase that uses light energy to abstract electrons from H(2)O, generating O(2) and a proton gradient subsequently used for ATP formation. It consists of a core antenna complex that captures photons, and an electron transfer chain that converts photonic excitation into a charge separation. The polypeptide is Cytochrome b559 subunit beta (Thalassiosira pseudonana (Marine diatom)).